Here is a 109-residue protein sequence, read N- to C-terminus: Small ribosomal subunit protein bS20 (109 aa).

This sequence belongs to the bacterial ribosomal protein bS20 family.

Its function is as follows. Binds directly to 16S ribosomal RNA. The sequence is that of Small ribosomal subunit protein bS20 from Synechococcus sp. (strain JA-2-3B'a(2-13)) (Cyanobacteria bacterium Yellowstone B-Prime).